The sequence spans 521 residues: Cholesterol side-chain cleavage enzyme, mitochondrial (521 aa).

The N-terminal 39 residues, Met-1 to Gly-39, are a transit peptide targeting the mitochondrion. Cys-462 lines the heme pocket.

Belongs to the cytochrome P450 family. As to quaternary structure, interacts with FDX1/adrenodoxin. Heme is required as a cofactor.

It is found in the mitochondrion inner membrane. It carries out the reaction 6 reduced [adrenodoxin] + cholesterol + 3 O2 + 6 H(+) = 4-methylpentanal + pregnenolone + 6 oxidized [adrenodoxin] + 4 H2O. It catalyses the reaction 2 reduced [adrenodoxin] + cholesterol + O2 + 2 H(+) = (22R)-hydroxycholesterol + 2 oxidized [adrenodoxin] + H2O. The enzyme catalyses (22R)-hydroxycholesterol + 2 reduced [adrenodoxin] + O2 + 2 H(+) = (20R,22R)-20,22-dihydroxycholesterol + 2 oxidized [adrenodoxin] + H2O. The catalysed reaction is (20R,22R)-20,22-dihydroxycholesterol + 2 reduced [adrenodoxin] + O2 + 2 H(+) = 4-methylpentanal + pregnenolone + 2 oxidized [adrenodoxin] + 2 H2O. Its pathway is lipid metabolism; C21-steroid hormone metabolism. It functions in the pathway steroid metabolism; cholesterol metabolism. A cytochrome P450 monooxygenase that catalyzes the side-chain hydroxylation and cleavage of cholesterol to pregnenolone, the precursor of most steroid hormones. Catalyzes three sequential oxidation reactions of cholesterol, namely the hydroxylation at C22 followed with the hydroxylation at C20 to yield 20R,22R-hydroxycholesterol that is further cleaved between C20 and C22 to yield the C21-steroid pregnenolone and 4-methylpentanal. Mechanistically, uses molecular oxygen inserting one oxygen atom into a substrate and reducing the second into a water molecule. Two electrons are provided by NADPH via a two-protein mitochondrial transfer system comprising flavoprotein FDXR (adrenodoxin/ferredoxin reductase) and nonheme iron-sulfur protein FDX1 or FDX2 (adrenodoxin/ferredoxin). The chain is Cholesterol side-chain cleavage enzyme, mitochondrial from Homo sapiens (Human).